The sequence spans 432 residues: tRNA(Ile)-lysidine synthase (432 aa).

20-25 (SGGLDS) contributes to the ATP binding site.

It belongs to the tRNA(Ile)-lysidine synthase family.

The protein resides in the cytoplasm. The catalysed reaction is cytidine(34) in tRNA(Ile2) + L-lysine + ATP = lysidine(34) in tRNA(Ile2) + AMP + diphosphate + H(+). Functionally, ligates lysine onto the cytidine present at position 34 of the AUA codon-specific tRNA(Ile) that contains the anticodon CAU, in an ATP-dependent manner. Cytidine is converted to lysidine, thus changing the amino acid specificity of the tRNA from methionine to isoleucine. The sequence is that of tRNA(Ile)-lysidine synthase from Shigella flexneri.